The sequence spans 115 residues: DNA-binding protein TV0008 (115 aa).

Residues Leu-18 to Ile-37 are disordered.

Belongs to the PDCD5 family.

The sequence is that of DNA-binding protein TV0008 from Thermoplasma volcanium (strain ATCC 51530 / DSM 4299 / JCM 9571 / NBRC 15438 / GSS1).